Consider the following 567-residue polypeptide: Thiol:disulfide interchange protein DsbD (567 aa).

A signal peptide spans 1 to 19 (MAQRIFTLILLLCSTSAFA). Disulfide bonds link cysteine 122–cysteine 128 and cysteine 185–cysteine 307. 7 consecutive transmembrane segments (helical) span residues 170-192 (ALWALLIGIGIAFTPCVLPMYPL), 212-234 (LAFIYVQGMALTYTALGLVVAAA), 246-268 (YVLIGLAIVFTLLALSMFGLFTL), 297-319 (GAIAGLICSPCTTAPLSAILLYI), 326-348 (WLGGGTLYLYALGMGLPLMLVTV), 358-380 (GPWMAHVKTAFGFVILALPVFLL), and 387-409 (AWGLRLWSLLGVAFFGWAFITSL). The Thioredoxin domain occupies 435 to 567 (QDWAFGSPSA…FSAHLHDRQP (133 aa)). The cysteines at positions 482 and 485 are disulfide-linked.

Belongs to the thioredoxin family. DsbD subfamily.

The protein localises to the cell inner membrane. The catalysed reaction is [protein]-dithiol + NAD(+) = [protein]-disulfide + NADH + H(+). It carries out the reaction [protein]-dithiol + NADP(+) = [protein]-disulfide + NADPH + H(+). Functionally, required to facilitate the formation of correct disulfide bonds in some periplasmic proteins and for the assembly of the periplasmic c-type cytochromes. Acts by transferring electrons from cytoplasmic thioredoxin to the periplasm. This transfer involves a cascade of disulfide bond formation and reduction steps. This Salmonella typhimurium (strain LT2 / SGSC1412 / ATCC 700720) protein is Thiol:disulfide interchange protein DsbD.